A 751-amino-acid polypeptide reads, in one-letter code: Photosystem I P700 chlorophyll a apoprotein A1 (751 aa).

8 consecutive transmembrane segments (helical) span residues 71–94 (VFSAHFGQLAIIFTWLSGMYFHGA), 157–180 (LYCTAIGALIFAALMLFAGWFHYH), 196–220 (LNHHLAGLLGLGSLSWAGHQIHVSL), 292–310 (TAHHHLAIAVLFLIAGHMY), 347–370 (WHAQLALNLAMLGSLTIIVAHHMY), 386–412 (LSLFTHHMWIGGFIIVGAAAHAAIFLV), 434–456 (AIISHLNWVCIFLGFHSFGLYIH), and 532–550 (FLVHHIHAFTIHVTVLILL). The [4Fe-4S] cluster site is built by cysteine 574 and cysteine 583. 2 helical membrane passes run 590 to 611 (HVFLGLFWMYNAISVVIFHFSW) and 665 to 687 (LSAYGLFFLGAHFVWAFSLMFLF). Residue histidine 676 coordinates chlorophyll a'. Chlorophyll a is bound by residues methionine 684 and tyrosine 692. Tryptophan 693 contributes to the phylloquinone binding site. The chain crosses the membrane as a helical span at residues 725–745 (AVGVAHYLLGGIVTTWAFFLA).

The protein belongs to the PsaA/PsaB family. In terms of assembly, the PsaA/B heterodimer binds the P700 chlorophyll special pair and subsequent electron acceptors. PSI consists of a core antenna complex that captures photons, and an electron transfer chain that converts photonic excitation into a charge separation. The eukaryotic PSI reaction center is composed of at least 11 subunits. P700 is a chlorophyll a/chlorophyll a' dimer, A0 is one or more chlorophyll a, A1 is one or both phylloquinones and FX is a shared 4Fe-4S iron-sulfur center. serves as cofactor.

The protein localises to the plastid. The protein resides in the chloroplast thylakoid membrane. It carries out the reaction reduced [plastocyanin] + hnu + oxidized [2Fe-2S]-[ferredoxin] = oxidized [plastocyanin] + reduced [2Fe-2S]-[ferredoxin]. Its function is as follows. PsaA and PsaB bind P700, the primary electron donor of photosystem I (PSI), as well as the electron acceptors A0, A1 and FX. PSI is a plastocyanin-ferredoxin oxidoreductase, converting photonic excitation into a charge separation, which transfers an electron from the donor P700 chlorophyll pair to the spectroscopically characterized acceptors A0, A1, FX, FA and FB in turn. Oxidized P700 is reduced on the lumenal side of the thylakoid membrane by plastocyanin. This chain is Photosystem I P700 chlorophyll a apoprotein A1, found in Welwitschia mirabilis (Tree tumbo).